The chain runs to 184 residues: dCTP deaminase (184 aa).

Residues 107 to 112, 131 to 133, glutamine 152, tyrosine 166, and glutamine 176 contribute to the dCTP site; these read KSTYAR and TLE. Glutamate 133 functions as the Proton donor/acceptor in the catalytic mechanism.

It belongs to the dCTP deaminase family. Homotrimer.

It catalyses the reaction dCTP + H2O + H(+) = dUTP + NH4(+). It functions in the pathway pyrimidine metabolism; dUMP biosynthesis; dUMP from dCTP (dUTP route): step 1/2. Functionally, catalyzes the deamination of dCTP to dUTP. The chain is dCTP deaminase from Gemmatimonas aurantiaca (strain DSM 14586 / JCM 11422 / NBRC 100505 / T-27).